Consider the following 1264-residue polypeptide: MSKTIPLRPANEQFTDSQWQAVFDGDENILVSASAGSGKTTVLVRRVIEKVKSGVDIDRLLIVTYTEAAAREMKERIQVALQKAMNEEQDPERRRHFSRQIALLPTANISTLHAFCLTVIRRFYYLIDIDPVFRMLTDETETLLLKEDVWDALREQFYAENQEAFYQLTANFSNDRSDDGLTNLIFSFYEFAKANPDPEAWINGLTQAYEVGDQLGESKLFQTYLKPLAVETLQRTLQRYEEMVTLTEGEEKLQKIWYLAQNEKEQTKQFLQFLERNDLESAYNLTELLSFDRYPTVRAEELKPTAEQAKQLREQNKKALNDLKKQLFTLSPDAMKQVLKEATPIVQEMAHVGKQFMEAYGAEKRLKNLVDFNDLEHYTLAILAKNQADGWHASEASVYYREKFDEVLVDEYQDINQLQESILYWLRRPLSTEGNLFMVGDVKQSIYSFRLADPTLFIEKYNQYGQGKEGKRIILAENFRSRKDVLDFTNLVFSQLMDERVGQIAYDESAALVHGFDQFSEAADYSTELLIYEKKATESVEFPELQSPELLIEDKTEGELYVTALKIRELIDQNFLIYDKKLKTDRPITYQDIVLLTPTKKNNLTILDVFKSLEIPVQVNDAQNYFQATEIRTMIALLQLIDNPYQDIPLAAVLRSPIVGLKENELVLIRLANKETSYYEAFLTFNQKMEPTMEEAVVQEKTIRFAESLEKWREQARRNQISNLLWTIYRETAYLDYVGGLPVGKQRQANLYALVDRAAAYEKTTFRGLFQFVRFIEKMQEKDKDLAEPVVLSEENAVRVMTIHASKGLEFPVVFVLDMTKEFNVSDLNERYIFEENLGVGIRYLQPEERVMYDTLPFLAIKQVRLRKLLSEEMRKLYVALTRAEQKLFLVGSYKDQAAMWKEWLKVGDVETLVLPAENRLQSKSSLMNWVGMTLVRHQKADEYQQEVVVSNVPQVKKHPANFHIQWFNEEQLRAAIQQLQLPERQAEDLAEKAQLSADKINRGLARLSFNYPFEVATRTTSYQSVSEIKRVFDDPDNKEIGKIEVREDNTIQAQPLIVNRMIEGDLSKPKFLDTVQAPSAAEIGTATHYLLQLIDLSKQPSYEEVRAVQERLVENKLILPAIAEKMNLEQIVAFFDTALGKQLIQHHQTVRREQPFSMLIEAEELIQNYPETTQDDLLIHGIIDGYIELDNQCILYDYKTDHVKGTSPQAISEIVERYRGQMNLYRRALQEATHKEVSHVYLILLNGGVIIDMQTGNVVDFIK.

The region spanning 12–482 (EQFTDSQWQA…IILAENFRSR (471 aa)) is the UvrD-like helicase ATP-binding domain. Residue 33-40 (ASAGSGKT) participates in ATP binding. In terms of domain architecture, UvrD-like helicase C-terminal spans 520–808 (SEAADYSTEL…RVMTIHASKG (289 aa)).

The protein belongs to the helicase family. AddA subfamily. As to quaternary structure, heterodimer of AddA and AddB/RexB. Requires Mg(2+) as cofactor.

The catalysed reaction is Couples ATP hydrolysis with the unwinding of duplex DNA by translocating in the 3'-5' direction.. The enzyme catalyses ATP + H2O = ADP + phosphate + H(+). In terms of biological role, the heterodimer acts as both an ATP-dependent DNA helicase and an ATP-dependent, dual-direction single-stranded exonuclease. Recognizes the chi site generating a DNA molecule suitable for the initiation of homologous recombination. The AddA nuclease domain is required for chi fragment generation; this subunit has the helicase and 3' -&gt; 5' nuclease activities. This is ATP-dependent helicase/nuclease subunit A from Enterococcus faecalis (strain ATCC 700802 / V583).